A 309-amino-acid polypeptide reads, in one-letter code: Neuropeptide-like 1 (309 aa).

The first 28 residues, 1–28, serve as a signal peptide directing secretion; that stretch reads MQAVLQSAHSSRRLMLLLSMLLNAAIQP. A propeptide spanning residues 29 to 99 is cleaved from the precursor; sequence RSIIVSATDD…GEYPDYLEED (71 aa). The disordered stretch occupies residues 126 to 147; the sequence is GQLPTAEPGEDYGDADSGEPSE. Residues 133 to 144 are compositionally biased toward acidic residues; that stretch reads PGEDYGDADSGE. Position 164 is a tyrosine amide (tyrosine 164). Asparagine 182 carries the asparagine amide modification.

MTYamide peptide: Expressed in the larval CNS (at protein level). NAP peptide: Expressed in the larval CNS (at protein level). IPNamide peptide: Expressed in the ventral ganglion of the third larval instar and adult brain (at protein level).

Its subcellular location is the secreted. Its function is as follows. Acts as a ligand for the receptor-type guanylate cyclase Gyc76C. Stimulates Gyc76c-dependent cGMP production and modulates the IMD innate immune pathway in response to salt stress by inducing nuclear translocation of NF-kappa-B protein Rel which leads to increased expression of the antimicrobial peptide diptericin. Does not appear to play a role in Gyc76C-mediated wing development. The polypeptide is Neuropeptide-like 1 (Nplp1) (Drosophila melanogaster (Fruit fly)).